We begin with the raw amino-acid sequence, 343 residues long: MKLKTKTMEWSGNSLKLLDQRKLPFIEEYVECKTHEEVAHAIKEMIVRGAPAIGVAAAFGYVLGLRDYKTGSLTDWMKQVKETLARTRPTAVNLFWALNRMEKVFFENADRENLFEILENEALKMAYEDIEVNKAIGKNGAQLIKDGSTILTHCNAGALATVDYGTALGVIRAAVESGKRIRVFADETRPYLQGARLTAWELMKDGIEVYVITDNMAGWLMKRGLIDAVVVGADRIALNGDTANKIGTYSLAVLAKRNNIPFYVAAPVSTIDPTIRSGEEIPIEERRPEEVTHCGGNRIAPEGVKVLNPAFDVTENTLITAIITEKGVIRPPFEENIKKILEV.

Substrate is bound by residues 48–50, Arg-88, and Gln-193; that span reads RGA. Asp-234 serves as the catalytic Proton donor. Residue 244-245 coordinates substrate; the sequence is NK.

It belongs to the eIF-2B alpha/beta/delta subunits family. MtnA subfamily.

It catalyses the reaction 5-(methylsulfanyl)-alpha-D-ribose 1-phosphate = 5-(methylsulfanyl)-D-ribulose 1-phosphate. It participates in amino-acid biosynthesis; L-methionine biosynthesis via salvage pathway; L-methionine from S-methyl-5-thio-alpha-D-ribose 1-phosphate: step 1/6. Catalyzes the interconversion of methylthioribose-1-phosphate (MTR-1-P) into methylthioribulose-1-phosphate (MTRu-1-P). The sequence is that of Methylthioribose-1-phosphate isomerase from Thermotoga maritima (strain ATCC 43589 / DSM 3109 / JCM 10099 / NBRC 100826 / MSB8).